The following is a 269-amino-acid chain: Peptide deformylase 1A, chloroplastic/mitochondrial (269 aa).

The N-terminal 60 residues, 1 to 60, are a transit peptide targeting the chloroplast and mitochondrion; the sequence is MGLHRDEATAMETLFRVSLRLLPVSAAVTCRSIRFPVSRPGSSHLLNRKLYNLPTSSSSS. Residues 123–126 and Gly187 each bind substrate; that span reads PGVG. Residue Cys188 coordinates Zn(2+). Positions 191-196 are dimerization; the sequence is VDGFRA. His230 contributes to the Zn(2+) binding site. Residue Glu231 is part of the active site. His234 contributes to the Zn(2+) binding site. A dimerization region spans residues 236–254; sequence DGNLYVDKMVPRTFRTVDN.

The protein belongs to the polypeptide deformylase family. Homodimer. Requires Zn(2+) as cofactor. In terms of tissue distribution, expressed in roots, leaves, flowers and siliques.

It is found in the plastid. The protein localises to the chloroplast stroma. It localises to the mitochondrion. The catalysed reaction is N-terminal N-formyl-L-methionyl-[peptide] + H2O = N-terminal L-methionyl-[peptide] + formate. Inhibited by actinonin. In terms of biological role, removes the formyl group from the N-terminal Met of newly synthesized proteins. This is Peptide deformylase 1A, chloroplastic/mitochondrial (PDF1A) from Arabidopsis thaliana (Mouse-ear cress).